The primary structure comprises 424 residues: Phosphoribosylamine--glycine ligase (424 aa).

The region spanning 107 to 313 is the ATP-grasp domain; the sequence is KTFMKKYGIP…FLETLLNFYE (207 aa). ATP is bound at residue 133 to 194; the sequence is VEKVGAPIVV…EEFLEGEEAS (62 aa). Mg(2+)-binding residues include E283 and N285.

This sequence belongs to the GARS family. Mg(2+) is required as a cofactor. It depends on Mn(2+) as a cofactor.

It carries out the reaction 5-phospho-beta-D-ribosylamine + glycine + ATP = N(1)-(5-phospho-beta-D-ribosyl)glycinamide + ADP + phosphate + H(+). It functions in the pathway purine metabolism; IMP biosynthesis via de novo pathway; N(1)-(5-phospho-D-ribosyl)glycinamide from 5-phospho-alpha-D-ribose 1-diphosphate: step 2/2. The polypeptide is Phosphoribosylamine--glycine ligase (Aquifex aeolicus (strain VF5)).